The following is a 147-amino-acid chain: Acidic phospholipase A2 S9-53F (147 aa).

Positions 1–19 (MYPAHLLVLLAVCVSLLGA) are cleaved as a signal peptide. Positions 20-27 (SDIPPQPL) are excised as a propeptide. Cystine bridges form between Cys38–Cys99, Cys54–Cys146, Cys56–Cys72, Cys71–Cys127, Cys78–Cys120, Cys88–Cys113, and Cys106–Cys118. Positions 55, 57, and 59 each coordinate Ca(2+). The active site involves His75. Asp76 contacts Ca(2+). Asp121 is a catalytic residue.

The protein belongs to the phospholipase A2 family. Group I subfamily. D49 sub-subfamily. Requires Ca(2+) as cofactor. As to expression, expressed by the venom gland.

The protein localises to the secreted. It carries out the reaction a 1,2-diacyl-sn-glycero-3-phosphocholine + H2O = a 1-acyl-sn-glycero-3-phosphocholine + a fatty acid + H(+). Its function is as follows. Snake venom phospholipase A2 (PLA2) that inhibits collagen-induced platelet aggregation. PLA2 catalyzes the calcium-dependent hydrolysis of the 2-acyl groups in 3-sn-phosphoglycerides. The polypeptide is Acidic phospholipase A2 S9-53F (Austrelaps superbus (Lowland copperhead snake)).